Reading from the N-terminus, the 253-residue chain is Imidazole glycerol phosphate synthase subunit HisF (253 aa).

Catalysis depends on residues D11 and D130.

Belongs to the HisA/HisF family. In terms of assembly, heterodimer of HisH and HisF.

It localises to the cytoplasm. It carries out the reaction 5-[(5-phospho-1-deoxy-D-ribulos-1-ylimino)methylamino]-1-(5-phospho-beta-D-ribosyl)imidazole-4-carboxamide + L-glutamine = D-erythro-1-(imidazol-4-yl)glycerol 3-phosphate + 5-amino-1-(5-phospho-beta-D-ribosyl)imidazole-4-carboxamide + L-glutamate + H(+). It functions in the pathway amino-acid biosynthesis; L-histidine biosynthesis; L-histidine from 5-phospho-alpha-D-ribose 1-diphosphate: step 5/9. Its function is as follows. IGPS catalyzes the conversion of PRFAR and glutamine to IGP, AICAR and glutamate. The HisF subunit catalyzes the cyclization activity that produces IGP and AICAR from PRFAR using the ammonia provided by the HisH subunit. This chain is Imidazole glycerol phosphate synthase subunit HisF, found in Cereibacter sphaeroides (strain KD131 / KCTC 12085) (Rhodobacter sphaeroides).